A 179-amino-acid polypeptide reads, in one-letter code: Replication restart protein DnaT (179 aa).

Residues serine 151–glycine 179 form a disordered region. A compositionally biased stretch (basic and acidic residues) spans proline 159–isoleucine 173.

It belongs to the DnaT family. In terms of assembly, homooligomerizes. Interacts with PriB. Component of the replication restart primosome. Primosome assembly occurs via a 'hand-off' mechanism. PriA binds to replication forks, subsequently PriB then DnaT bind; DnaT then displaces ssDNA to generate the helicase loading substrate.

Involved in the restart of stalled replication forks, which reloads the replicative helicase on sites other than the origin of replication. Can function in multiple replication restart pathways. Displaces ssDNA from a PriB-ssDNA complex. Probably forms a spiral filament on ssDNA. In Klebsiella pneumoniae (strain 342), this protein is Replication restart protein DnaT.